An 802-amino-acid polypeptide reads, in one-letter code: Putative transcriptional regulator cudA (802 aa).

4 disordered regions span residues 1–148 (MNQS…PSAI), 154–173 (ISNN…NLLL), 381–446 (NNIN…NNEN), and 636–658 (QPQQ…QQGQ). The span at 25-63 (NNNNNGNNGMMMNQQQMQQHVVPHLHHLQQQQQQPQQQQ) shows a compositional bias: low complexity. Residues 69–88 (DYSNSPNGTTNGSTMSPNCI) are compositionally biased toward polar residues. Over residues 89–128 (NTNNNNNNNNNNNNNSNNNNNNNNNASNNLTSNKSSSTNT) the composition is skewed to low complexity. The span at 129–142 (PQIGQLQASPANLT) shows a compositional bias: polar residues. Positions 381–445 (NNINNNNNIN…CNNNNNNNNE (65 aa)) are enriched in low complexity.

In terms of tissue distribution, expressed in the prestalk cells that constitute the slug tip (pstA cells) and in prespore cells (at protein level). Not expressed in the band of prestalk cells that lies behind the slug tip (pstO cells). Highly expressed in pstO derived papilla cells during culmination.

It is found in the nucleus. It localises to the nucleoplasm. Its function is as follows. Essential for normal culmination. May function as a transcriptional regulator. The polypeptide is Putative transcriptional regulator cudA (cudA) (Dictyostelium discoideum (Social amoeba)).